We begin with the raw amino-acid sequence, 354 residues long: NADH-quinone oxidoreductase subunit H (354 aa).

A run of 8 helical transmembrane segments spans residues 23–43, 91–111, 124–144, 162–182, 203–223, 250–270, 291–311, and 330–350; these read LVRAVCIILPLLLCVAYLILW, YIIAPLMVLMPAVAIWAVVPF, LLYVMAISSVGVYGVILAGWA, ISYEIAMGFALVTVLMVTGSL, ILSWNWLSLLPMFGVYFISGV, GMAFALFFLAEYINMIVISAM, IPGFFWLLIKVFLLLSVFIWL, and IFIPLTVGWLIIVAIWLVSPW.

It belongs to the complex I subunit 1 family. In terms of assembly, NDH-1 is composed of 14 different subunits. Subunits NuoA, H, J, K, L, M, N constitute the membrane sector of the complex.

The protein resides in the cell inner membrane. It catalyses the reaction a quinone + NADH + 5 H(+)(in) = a quinol + NAD(+) + 4 H(+)(out). Functionally, NDH-1 shuttles electrons from NADH, via FMN and iron-sulfur (Fe-S) centers, to quinones in the respiratory chain. The immediate electron acceptor for the enzyme in this species is believed to be ubiquinone. Couples the redox reaction to proton translocation (for every two electrons transferred, four hydrogen ions are translocated across the cytoplasmic membrane), and thus conserves the redox energy in a proton gradient. This subunit may bind ubiquinone. The protein is NADH-quinone oxidoreductase subunit H of Ralstonia nicotianae (strain ATCC BAA-1114 / GMI1000) (Ralstonia solanacearum).